Reading from the N-terminus, the 97-residue chain is Na(+)/H(+) antiporter subunit F1 (97 aa).

The next 3 membrane-spanning stretches (helical) occupy residues 3-23 (HNVI…AMLI), 35-55 (VVAL…FSIL), and 60-80 (YMIV…AVFS).

The protein belongs to the CPA3 antiporters (TC 2.A.63) subunit F family. As to quaternary structure, may form a heterooligomeric complex that consists of seven subunits: mnhA1, mnhB1, mnhC1, mnhD1, mnhE1, mnhF1 and mnhG1.

It localises to the cell membrane. In terms of biological role, mnh complex is a Na(+)/H(+) antiporter involved in Na(+) excretion. In Staphylococcus aureus (strain Mu3 / ATCC 700698), this protein is Na(+)/H(+) antiporter subunit F1 (mnhF1).